We begin with the raw amino-acid sequence, 301 residues long: MGESAESGSRQLPAMSPPRRSVAYRRKIVDALWWAACVCCLAVVITPTLWMLIGVVSRAVPVFHWSVLVQDSQGNGGGLRNAIIGTAVLAIGVILVGGTVSVLTGIYLSEFATGKTRSILRGAYEVLSGIPSIVLGYVGYLALVVYFDWGFSLAAGVLVLSVMSIPYIAKATESALAQVPTSYREAAEALGLPAGWALRKIVLKTAMPGIVTGMLVALALAIGETAPLLYTAGWSNSPPTGQLTDSPVGYLTYPIWTFYNQPSKSAQDLSYDAALLLIVFLLLLIFIGRLINWLSRRRWDV.

The next 6 helical transmembrane spans lie at A36–V56, I83–L103, L127–F147, W149–A169, G209–L229, and A274–L294. In terms of domain architecture, ABC transmembrane type-1 spans I83–G288.

This sequence belongs to the binding-protein-dependent transport system permease family. CysTW subfamily.

It localises to the cell membrane. Its function is as follows. Part of the binding-protein-dependent transport system for phosphate; probably responsible for the translocation of the substrate across the membrane. The polypeptide is Phosphate transport system permease protein PstA 2 (pstA2) (Mycobacterium bovis (strain ATCC BAA-935 / AF2122/97)).